A 380-amino-acid polypeptide reads, in one-letter code: Ribosomal RNA large subunit methyltransferase F (380 aa).

Positions M1 to K32 are disordered.

Belongs to the methyltransferase superfamily. METTL16/RlmF family.

The protein localises to the cytoplasm. The enzyme catalyses adenosine(1618) in 23S rRNA + S-adenosyl-L-methionine = N(6)-methyladenosine(1618) in 23S rRNA + S-adenosyl-L-homocysteine + H(+). Its function is as follows. Specifically methylates the adenine in position 1618 of 23S rRNA. This Shewanella halifaxensis (strain HAW-EB4) protein is Ribosomal RNA large subunit methyltransferase F.